A 1204-amino-acid chain; its full sequence is Bromodomain and PHD finger-containing protein 3 (1204 aa).

2 disordered regions span residues 1-27 and 76-127; these read MRKP…KCSP and SNKE…TGSQ. Positions 89 to 99 are enriched in basic residues; it reads KSKKPSSKGKR. Residues 212-262 form a PHD-type 1 zinc finger; it reads DAFCCVCLDDECHNSNVILFCDICNLAVHQECYGVPYIPEGQWLCRCCLQS. A C2HC pre-PHD-type zinc finger spans residues 266–299; that stretch reads PVDCVLCPNKGGAFKQTSDGHWAHVVCAIWIPEV. The PHD-type 2 zinc-finger motif lies at 323 to 387; sequence LTCYICKQKG…RKTAYCEAHS (65 aa). The tract at residues 393–464 is disordered; the sequence is ARRKGDSPRS…KKEPEEAGRE (72 aa). 2 positions are modified to phosphoserine: S399 and S402. A compositionally biased stretch (acidic residues) spans 417 to 429; the sequence is GEEEQEEAEEEGQ. A compositionally biased stretch (basic residues) spans 442–454; that stretch reads VSKKGKMSLKQKI. K445, K447, and K670 each carry N6-acetyllysine. Positions 588 to 692 constitute a Bromo domain; it reads LELMPFTVLL…DLGGAILRHA (105 aa). Phosphoserine is present on residues S712 and S739. Residues 778 to 879 form a disordered region; sequence RQKLAQPPPP…FLKSRKVEDE (102 aa). A compositionally biased stretch (acidic residues) spans 816 to 826; sequence QQEEPEEEGDR. 3 positions are modified to phosphoserine: S899, S961, and S964. Residues 903–1015 are disordered; it reads IDRLSLTNPD…ESGSDSECSL (113 aa). A compositionally biased stretch (basic and acidic residues) spans 979–990; that stretch reads SCSDSEGERSPQ. A PWWP domain is found at 1075–1158; sequence PLELVWAKCR…RDKVLPLGVE (84 aa).

In terms of assembly, component of some HBO1 complexes composed of KAT7/HBO1, MEAF6, ING4 or ING5, and BRPF3. Component of the MOZ/MORF complex composed at least of ING5, KAT6A, KAT6B, MEAF6 and one of BRPF1, BRD1/BRPF2 and BRPF3. Interacts with KAT7/HBO1; the interaction is direct. Highly expressed in the adult testis and brain.

It localises to the nucleus. Its function is as follows. Scaffold subunit of various histone acetyltransferase (HAT) complexes, such as the MOZ/MORF and HBO1 complexes, which have a histone H3 acetyltransferase activity. Plays a role in DNA replication initiation by directing KAT7/HBO1 specificity towards histone H3 'Lys-14' acetylation (H3K14ac), thereby facilitating the activation of replication origins. Component of the MOZ/MORF complex which has a histone H3 acetyltransferase activity. This chain is Bromodomain and PHD finger-containing protein 3, found in Mus musculus (Mouse).